Consider the following 366-residue polypeptide: Aminomethyltransferase (366 aa).

The protein belongs to the GcvT family. As to quaternary structure, the glycine cleavage system is composed of four proteins: P, T, L and H.

It catalyses the reaction N(6)-[(R)-S(8)-aminomethyldihydrolipoyl]-L-lysyl-[protein] + (6S)-5,6,7,8-tetrahydrofolate = N(6)-[(R)-dihydrolipoyl]-L-lysyl-[protein] + (6R)-5,10-methylene-5,6,7,8-tetrahydrofolate + NH4(+). Functionally, the glycine cleavage system catalyzes the degradation of glycine. This is Aminomethyltransferase from Bacillus cereus (strain G9842).